A 500-amino-acid chain; its full sequence is ATP synthase subunit alpha (500 aa).

An ATP-binding site is contributed by 169 to 176; the sequence is GDRQTGKT.

It belongs to the ATPase alpha/beta chains family. As to quaternary structure, F-type ATPases have 2 components, CF(1) - the catalytic core - and CF(0) - the membrane proton channel. CF(1) has five subunits: alpha(3), beta(3), gamma(1), delta(1), epsilon(1). CF(0) has three main subunits: a(1), b(2) and c(9-12). The alpha and beta chains form an alternating ring which encloses part of the gamma chain. CF(1) is attached to CF(0) by a central stalk formed by the gamma and epsilon chains, while a peripheral stalk is formed by the delta and b chains.

Its subcellular location is the cell membrane. It carries out the reaction ATP + H2O + 4 H(+)(in) = ADP + phosphate + 5 H(+)(out). Functionally, produces ATP from ADP in the presence of a proton gradient across the membrane. The alpha chain is a regulatory subunit. This Lactococcus lactis subsp. lactis (strain IL1403) (Streptococcus lactis) protein is ATP synthase subunit alpha.